The chain runs to 430 residues: Asparagine--tRNA ligase (430 aa).

Belongs to the class-II aminoacyl-tRNA synthetase family. Homodimer.

Its subcellular location is the cytoplasm. It catalyses the reaction tRNA(Asn) + L-asparagine + ATP = L-asparaginyl-tRNA(Asn) + AMP + diphosphate + H(+). The chain is Asparagine--tRNA ligase from Bacillus licheniformis (strain ATCC 14580 / DSM 13 / JCM 2505 / CCUG 7422 / NBRC 12200 / NCIMB 9375 / NCTC 10341 / NRRL NRS-1264 / Gibson 46).